Reading from the N-terminus, the 234-residue chain is Large ribosomal subunit protein uL1 (234 aa).

This sequence belongs to the universal ribosomal protein uL1 family. In terms of assembly, part of the 50S ribosomal subunit.

Its function is as follows. Binds directly to 23S rRNA. The L1 stalk is quite mobile in the ribosome, and is involved in E site tRNA release. In terms of biological role, protein L1 is also a translational repressor protein, it controls the translation of the L11 operon by binding to its mRNA. The protein is Large ribosomal subunit protein uL1 of Sulfurovum sp. (strain NBC37-1).